A 352-amino-acid polypeptide reads, in one-letter code: Diacylglycerol acyltransferase/mycolyltransferase Ag85C (352 aa).

An N-terminal signal peptide occupies residues 1-37; sequence MSFIEKVRKLRGAAATMPRRLAIAAVGASLLSGVAVA. Residue 86–87 participates in substrate binding; sequence LR. The interval 102–112 is fibronectin-binding; the sequence is FEEFYQSGLSV. Substrate is bound by residues serine 170 and asparagine 198. Serine 170 acts as the Nucleophile in catalysis. The active site involves glutamate 274. Residues 276 to 279 and 306 to 308 contribute to the substrate site; these read LTLR and HSW. Residue histidine 306 is part of the active site. The tract at residues 332–352 is disordered; the sequence is TAAPAQPAQPAQPAQPAQPAT. The span at 333-352 shows a compositional bias: low complexity; sequence AAPAQPAQPAQPAQPAQPAT.

Belongs to the mycobacterial A85 antigen family. Homodimer.

The protein resides in the secreted. The catalysed reaction is an acyl-CoA + a 1,2-diacyl-sn-glycerol = a triacyl-sn-glycerol + CoA. The enzyme catalyses 2 alpha,alpha'-trehalose 6-mycolate = alpha,alpha'-trehalose 6,6'-bismycolate + alpha,alpha-trehalose. The antigen 85 proteins (FbpA, FbpB, FbpC) are responsible for the high affinity of mycobacteria to fibronectin, a large adhesive glycoprotein, which facilitates the attachment of M.tuberculosis to murine alveolar macrophages (AMs). They also help to maintain the integrity of the cell wall by catalyzing the transfer of mycolic acids to cell wall arabinogalactan and through the synthesis of alpha,alpha-trehalose dimycolate (TDM, cord factor). They catalyze the transfer of a mycoloyl residue from one molecule of alpha,alpha-trehalose monomycolate (TMM) to another TMM, leading to the formation of TDM. The protein is Diacylglycerol acyltransferase/mycolyltransferase Ag85C (fbpC) of Mycobacterium avium.